The sequence spans 436 residues: Arginine biosynthesis bifunctional protein ArgJ, mitochondrial (436 aa).

Residues T172, K198, T209, E298, N431, and S436 each coordinate substrate. Residue T209 is the Nucleophile of the active site.

Belongs to the ArgJ family. Heterodimer of an alpha and a beta chain. In terms of processing, the alpha and beta chains are autoproteolytically processed from a single precursor protein within the mitochondrion.

Its subcellular location is the mitochondrion matrix. It catalyses the reaction N(2)-acetyl-L-ornithine + L-glutamate = N-acetyl-L-glutamate + L-ornithine. The enzyme catalyses L-glutamate + acetyl-CoA = N-acetyl-L-glutamate + CoA + H(+). Its pathway is amino-acid biosynthesis; L-arginine biosynthesis; L-ornithine and N-acetyl-L-glutamate from L-glutamate and N(2)-acetyl-L-ornithine (cyclic): step 1/1. It participates in amino-acid biosynthesis; L-arginine biosynthesis; N(2)-acetyl-L-ornithine from L-glutamate: step 1/4. Functionally, catalyzes two activities which are involved in the cyclic version of arginine biosynthesis: the synthesis of acetylglutamate from glutamate and acetyl-CoA, and of ornithine by transacetylation between acetylornithine and glutamate. This is Arginine biosynthesis bifunctional protein ArgJ, mitochondrial from Meyerozyma guilliermondii (strain ATCC 6260 / CBS 566 / DSM 6381 / JCM 1539 / NBRC 10279 / NRRL Y-324) (Yeast).